The primary structure comprises 401 residues: MLEKHRVLDSAPEYVDKKKYLWILSTLWPATPMIGIWLANETGWGIFYGLVLLVWYGALPLLDAMFGEDFNNPPEEVVPKLEKERYYRVLTYLTVPMHYAALIVSAWWVGTQPMSWLEIGALALSLGIVNGLALNTGHELGHKKETFDRWMAKIVLAVVGYGHFFIEHNKGHHRDVATPMDPATSRMGESIYKFSIREIPGAFIRAWGLEEQRLSRRGQSVWSFDNEILQPMIITVILYAVLLALFGPKMLVFLPIQMAFGWWQLTSANYIEHYGLLRQKMEDGRYEHQKPHHSWNSNHIVSNLVLFHLQRHSDHHAHPTRSYQSLRDFPGLPALPTGYPGAFLMAMIPQWFRSVMDPKVVDWAGGDLNKIQIDDSMRETYLKKFGTSSAGHSSSTSAVAS.

Over 1 to 20 (MLEKHRVLDSAPEYVDKKKY) the chain is Cytoplasmic. The chain crosses the membrane as a helical span at residues 21–39 (LWILSTLWPATPMIGIWLA). The Periplasmic segment spans residues 40 to 41 (NE). The helical transmembrane segment at 42-62 (TGWGIFYGLVLLVWYGALPLL) threads the bilayer. The Cytoplasmic segment spans residues 63–88 (DAMFGEDFNNPPEEVVPKLEKERYYR). A helical transmembrane segment spans residues 89 to 111 (VLTYLTVPMHYAALIVSAWWVGT). Over 112–113 (QP) the chain is Periplasmic. Residues 114–134 (MSWLEIGALALSLGIVNGLAL) traverse the membrane as a helical segment. Residues 135–228 (NTGHELGHKK…QSVWSFDNEI (94 aa)) lie on the Cytoplasmic side of the membrane. His-138, His-142, His-168, His-172, and His-173 together coordinate Fe cation. Residues 229-249 (LQPMIITVILYAVLLALFGPK) form a helical membrane-spanning segment. Residue Met-250 is a topological domain, periplasmic. Residues 251 to 270 (LVFLPIQMAFGWWQLTSANY) form a helical membrane-spanning segment. Over 271–401 (IEHYGLLRQK…HSSSTSAVAS (131 aa)) the chain is Cytoplasmic. Fe cation is bound by residues His-312, His-315, and His-316.

The protein belongs to the fatty acid desaturase type 1 family. AlkB subfamily. It depends on Fe(3+) as a cofactor.

The protein localises to the cell inner membrane. It catalyses the reaction octane + 2 reduced [rubredoxin] + O2 + 2 H(+) = 2 oxidized [rubredoxin] + octan-1-ol + H2O. The protein operates within hydrocarbon metabolism; alkane degradation. Its function is as follows. Catalyzes the hydroxylation of n-alkanes and fatty acids in the presence of a NADH-rubredoxin reductase and rubredoxin. The protein is Alkane 1-monooxygenase (alkB) of Ectopseudomonas oleovorans (Pseudomonas oleovorans).